The chain runs to 92 residues: MSKVCIIAWVYGRVQGVGFRYTTQYEAKKLGLTGYAKNLDDGSVEVVACGDEGQVEKLMQWLKSGGPRSARVERVLSEPHHPSGELTDFRIR.

Cys5 and Cys49 are joined by a disulfide. Residues 5-92 (CIIAWVYGRV…SGELTDFRIR (88 aa)) form the Acylphosphatase-like domain. Residues Arg20 and Asn38 contribute to the active site.

Belongs to the acylphosphatase family.

It carries out the reaction an acyl phosphate + H2O = a carboxylate + phosphate + H(+). This chain is Acylphosphatase, found in Escherichia coli O6:H1 (strain CFT073 / ATCC 700928 / UPEC).